The primary structure comprises 137 residues: Large-conductance mechanosensitive channel (137 aa).

2 helical membrane passes run 10-30 (FAMR…AAFG) and 76-96 (GVFI…FVAI).

Belongs to the MscL family. As to quaternary structure, homopentamer.

The protein resides in the cell inner membrane. In terms of biological role, channel that opens in response to stretch forces in the membrane lipid bilayer. May participate in the regulation of osmotic pressure changes within the cell. The protein is Large-conductance mechanosensitive channel of Salmonella choleraesuis (strain SC-B67).